We begin with the raw amino-acid sequence, 376 residues long: E3 ubiquitin-protein ligase RNF133 (376 aa).

A PA domain is found at 65–167 (SSTLKRVAGV…LKGTEIFHLI (103 aa)). Residues 190–210 (YLVSFVIVTTATLAYFIFYHI) form a helical membrane-spanning segment. Residues 256–297 (CVICFERYKPNDIVRILTCKHFFHKNCIDPWILPHGTCPICK) form an RING-type; atypical zinc finger. The interval 327–376 (ETLSPSEEETNNEVSPAGTSDKVIHVEENPTSQNNDIQPHSVVEDVHPSP) is disordered. Over residues 355–364 (NPTSQNNDIQ) the composition is skewed to polar residues.

In terms of assembly, interacts with E3 ligase UBE2J1. Post-translationally, auto-ubiquitinated. As to expression, expression is testis-specific.

The protein resides in the endoplasmic reticulum membrane. It catalyses the reaction S-ubiquitinyl-[E2 ubiquitin-conjugating enzyme]-L-cysteine + [acceptor protein]-L-lysine = [E2 ubiquitin-conjugating enzyme]-L-cysteine + N(6)-ubiquitinyl-[acceptor protein]-L-lysine.. The protein operates within protein modification; protein ubiquitination. Its function is as follows. Has E3 ubiquitin-protein ligase activity. Plays a role in male fecundity through the interaction with the E2 ubituitin-protein ligase UBE2J1. The protein is E3 ubiquitin-protein ligase RNF133 of Homo sapiens (Human).